The sequence spans 203 residues: MRGTLYIVAAPSGAGKSSIVNATLARDPKIALSISFTSRAPRPGERHAEHYHFVSADEFQGMIEAGDFFEYALVHGDWKGTARQSVEPQLAAGHDVLLEIDWQGARQVRQKVPDAVSVFILPPSRQALDERMRKRGQDSEDVMAQRLAAAREEMLHFEEFDYVIINETFDIAVAEMCAIFTASRLRRQAQQQRHAGLIQALLE.

The Guanylate kinase-like domain maps to 3-181 (GTLYIVAAPS…AVAEMCAIFT (179 aa)). 10 to 17 (APSGAGKS) lines the ATP pocket.

This sequence belongs to the guanylate kinase family.

The protein localises to the cytoplasm. The enzyme catalyses GMP + ATP = GDP + ADP. Functionally, essential for recycling GMP and indirectly, cGMP. This Xanthomonas euvesicatoria pv. vesicatoria (strain 85-10) (Xanthomonas campestris pv. vesicatoria) protein is Guanylate kinase.